Reading from the N-terminus, the 513-residue chain is Putative ribose/galactose/methyl galactoside import ATP-binding protein (513 aa).

ABC transporter domains follow at residues 24 to 260 (LSAE…VGRE) and 270 to 510 (VPIG…VMEL). 56–63 (GENGAGKS) lines the ATP pocket.

It belongs to the ABC transporter superfamily. Carbohydrate importer 2 (CUT2) (TC 3.A.1.2) family.

The protein resides in the cell inner membrane. It catalyses the reaction D-ribose(out) + ATP + H2O = D-ribose(in) + ADP + phosphate + H(+). The catalysed reaction is D-galactose(out) + ATP + H2O = D-galactose(in) + ADP + phosphate + H(+). In terms of biological role, part of an ABC transporter complex involved in carbohydrate import. Could be involved in ribose, galactose and/or methyl galactoside import. Responsible for energy coupling to the transport system. This is Putative ribose/galactose/methyl galactoside import ATP-binding protein from Rhizobium johnstonii (strain DSM 114642 / LMG 32736 / 3841) (Rhizobium leguminosarum bv. viciae).